The chain runs to 234 residues: Demethylmenaquinone methyltransferase (234 aa).

Residues threonine 58, aspartate 79, and 106–107 each bind S-adenosyl-L-methionine; that span reads NA.

The protein belongs to the class I-like SAM-binding methyltransferase superfamily. MenG/UbiE family.

The catalysed reaction is a 2-demethylmenaquinol + S-adenosyl-L-methionine = a menaquinol + S-adenosyl-L-homocysteine + H(+). It participates in quinol/quinone metabolism; menaquinone biosynthesis; menaquinol from 1,4-dihydroxy-2-naphthoate: step 2/2. Methyltransferase required for the conversion of demethylmenaquinol (DMKH2) to menaquinol (MKH2). In Geobacillus sp. (strain WCH70), this protein is Demethylmenaquinone methyltransferase.